Consider the following 231-residue polypeptide: Floral homeotic protein PMADS 1 (231 aa).

Residues 3-58 (RGKIQIKRIENQTNRQVTYSKRRNGLFKKANELTVLCDAKVSIIMISSTGKLHEFI) form the MADS-box domain. Residues 84 to 174 (YEKMQEQLRK…LLEFDARQED (91 aa)) form the K-box domain.

Predominantly expressed in petals and stamens, less in carpels and sepals.

Its subcellular location is the nucleus. Functionally, transcription factor involved in the genetic control of flower development. Necessary for the normal development of petals. Absence of the PMADS1 protein causes transformation of petals into sepals. The chain is Floral homeotic protein PMADS 1 (PMADS1) from Petunia hybrida (Petunia).